Here is a 322-residue protein sequence, read N- to C-terminus: MTIKKIAVLTSGGDSQGMNAAVRAVVRSGLFYGLEVYGIQRGYQGLLNDDIFSMDLRSVGDIIQRGGTVLQSARCKEFMTPEGQQKGADILRKRGIDGLVVIGGDGSYHGANKLSKLGINTMALPGTIDNDISYTDFTIGFDTSVSIVVDAINKLRDTMSSHERSSIVEVMGRHCGDIALYAGLASGAETIIVPEVPFDMDEIAERMKQNFAHGKRHSIVVVAEGAGNGENVAKQLVERCETLEPRVTVLGHIQRGGTPTPADRNLASRLGDFAVRMLIAGESAKACGIISNELVLTDIDKVVNSKKEFNMELYELAARLSQ.

Glycine 13 provides a ligand contact to ATP. 23 to 27 (RAVVR) contributes to the ADP binding site. Residues 74–75 (RC) and 104–107 (GDGS) contribute to the ATP site. Aspartate 105 is a Mg(2+) binding site. 127 to 129 (TID) contacts substrate. Aspartate 129 serves as the catalytic Proton acceptor. Arginine 156 provides a ligand contact to ADP. Substrate is bound by residues arginine 164 and 171-173 (MGR). ADP is bound by residues 187-189 (GAE) and 215-217 (KRH). Residues glutamate 224, arginine 246, and 252-255 (HIQR) contribute to the substrate site.

The protein belongs to the phosphofructokinase type A (PFKA) family. ATP-dependent PFK group I subfamily. Prokaryotic clade 'B1' sub-subfamily. In terms of assembly, homotetramer. It depends on Mg(2+) as a cofactor.

The protein localises to the cytoplasm. The catalysed reaction is beta-D-fructose 6-phosphate + ATP = beta-D-fructose 1,6-bisphosphate + ADP + H(+). Its pathway is carbohydrate degradation; glycolysis; D-glyceraldehyde 3-phosphate and glycerone phosphate from D-glucose: step 3/4. With respect to regulation, allosterically activated by ADP and other diphosphonucleosides, and allosterically inhibited by phosphoenolpyruvate. Functionally, catalyzes the phosphorylation of D-fructose 6-phosphate to fructose 1,6-bisphosphate by ATP, the first committing step of glycolysis. The protein is ATP-dependent 6-phosphofructokinase of Paenibacillus macquariensis (Bacillus macquariensis).